The primary structure comprises 572 residues: Urease subunit alpha (572 aa).

The 439-residue stretch at Gly134–Phe572 folds into the Urease domain. Residues His139, His141, and Lys222 each coordinate Ni(2+). At Lys222 the chain carries N6-carboxylysine. His224 lines the substrate pocket. His251 and His277 together coordinate Ni(2+). Catalysis depends on His325, which acts as the Proton donor. Asp365 contacts Ni(2+).

This sequence belongs to the metallo-dependent hydrolases superfamily. Urease alpha subunit family. In terms of assembly, heterotrimer of UreA (gamma), UreB (beta) and UreC (alpha) subunits. Three heterotrimers associate to form the active enzyme. It depends on Ni cation as a cofactor. Carboxylation allows a single lysine to coordinate two nickel ions.

The protein resides in the cytoplasm. The catalysed reaction is urea + 2 H2O + H(+) = hydrogencarbonate + 2 NH4(+). The protein operates within nitrogen metabolism; urea degradation; CO(2) and NH(3) from urea (urease route): step 1/1. This chain is Urease subunit alpha, found in Polaromonas sp. (strain JS666 / ATCC BAA-500).